The primary structure comprises 550 residues: Forkhead box protein N4 (550 aa).

A DNA-binding region (fork-head) is located at residues 231–327; the sequence is KPIYSYSCLI…EEMQKWKRKD (97 aa). Residues 402-411 are compositionally biased toward low complexity; the sequence is LQNQSRLAPS. Positions 402 to 437 are disordered; the sequence is LQNQSRLAPSSPAPAQTPPLHTVPDMTNSSLPQHPA.

As to expression, isoform 1 is expressed mainly in adult thymus. Isoform 2 is detected in adult skin. Isoform 3 is expressed in adult brain and embryo. Prominent expression sites include the olfactory placode, the basal layer of the olfactory epithelium, the neuroepithelium of the developing retina, the germinal zone of the differentiated eye, regions of motoneuron development in the neural tube and periventricular regions of the brain.

The protein localises to the nucleus. Transcription factor essential for neural and some non-neural tissues development. Binds to an 11-bp consensus sequence containing the invariant tetranucleotide 5'-ACGC-3'. During development of the central nervous system, required to specify the amacrine and horizontal cell fates from multipotent retinal progenitors while suppressing the alternative photoreceptor cell fates. Drives commitment of p2 progenitors to the V2b interneuron fates during spinal cord neurogenesis. In development of non-neural tissues, plays an essential role in the specification of the atrioventricular canal. This chain is Forkhead box protein N4 (foxn4), found in Danio rerio (Zebrafish).